A 151-amino-acid polypeptide reads, in one-letter code: Proteolipid protein 2 (151 aa).

The MARVEL domain maps to 19 to 137 (FSRTKKGILL…DAYITFPLKQ (119 aa)). A run of 4 helical transmembrane segments spans residues 25–45 (GILL…FSAS), 48–68 (AYSS…VFYM), 85–105 (FFRS…VLVE), and 112–132 (IVAG…AYIT).

Its subcellular location is the membrane. Its function is as follows. May play a role in cell differentiation in the intestinal epithelium. The polypeptide is Proteolipid protein 2 (Plp2) (Rattus norvegicus (Rat)).